Consider the following 408-residue polypeptide: Tryptophan synthase beta chain (408 aa).

Lysine 90 carries the N6-(pyridoxal phosphate)lysine modification.

The protein belongs to the TrpB family. As to quaternary structure, tetramer of two alpha and two beta chains. Requires pyridoxal 5'-phosphate as cofactor.

The catalysed reaction is (1S,2R)-1-C-(indol-3-yl)glycerol 3-phosphate + L-serine = D-glyceraldehyde 3-phosphate + L-tryptophan + H2O. The protein operates within amino-acid biosynthesis; L-tryptophan biosynthesis; L-tryptophan from chorismate: step 5/5. Functionally, the beta subunit is responsible for the synthesis of L-tryptophan from indole and L-serine. This Bacillus licheniformis (strain ATCC 14580 / DSM 13 / JCM 2505 / CCUG 7422 / NBRC 12200 / NCIMB 9375 / NCTC 10341 / NRRL NRS-1264 / Gibson 46) protein is Tryptophan synthase beta chain.